Reading from the N-terminus, the 406-residue chain is Probable sphingosine-1-phosphate phosphatase (406 aa).

Transmembrane regions (helical) follow at residues 66-86 and 92-112; these read ILGE…CVAT and LCVV…TFTL. Positions 107–115 are phosphatase sequence motif I; it reads KNTFTLPRP. A phosphatase sequence motif II region spans residues 133–136; the sequence is PSTH. His136 (proton donor) is an active-site residue. 2 helical membrane passes run 138–158 and 162–182; these read ASAF…FPTI and FNIS…SVMF. Residues 183–194 are phosphatase sequence motif III; that stretch reads SRLYNGHHTPMD. His190 functions as the Nucleophile in the catalytic mechanism. A run of 5 helical transmembrane segments spans residues 193–213, 225–245, 254–274, 313–333, and 374–394; these read MDVI…TYQL, TFLF…FFHP, AYPE…SLWL, ILIG…FFFF, and LFVY…FYYL.

The protein belongs to the type 2 lipid phosphate phosphatase family.

The protein resides in the endoplasmic reticulum membrane. Has enzymatic activity against both sphingosine 1 phosphate (S1P) and dihydro-S1P. Regulates intracellular and extracellular S1P levels. This Dictyostelium discoideum (Social amoeba) protein is Probable sphingosine-1-phosphate phosphatase (sppA).